A 234-amino-acid polypeptide reads, in one-letter code: Flagellar L-ring protein (234 aa).

The N-terminal stretch at 1 to 15 (MRYAVICMLLLAASG) is a signal peptide. Cys16 is lipidated: N-palmitoyl cysteine. Cys16 carries the S-diacylglycerol cysteine lipid modification.

The protein belongs to the FlgH family. In terms of assembly, the basal body constitutes a major portion of the flagellar organelle and consists of four rings (L,P,S, and M) mounted on a central rod.

Its subcellular location is the cell outer membrane. It is found in the bacterial flagellum basal body. Assembles around the rod to form the L-ring and probably protects the motor/basal body from shearing forces during rotation. The protein is Flagellar L-ring protein of Oleidesulfovibrio alaskensis (strain ATCC BAA-1058 / DSM 17464 / G20) (Desulfovibrio alaskensis).